The primary structure comprises 45 residues: Large ribosomal subunit protein bL34 (45 aa).

It belongs to the bacterial ribosomal protein bL34 family.

The polypeptide is Large ribosomal subunit protein bL34 (rpmH) (Streptomyces coelicolor (strain ATCC BAA-471 / A3(2) / M145)).